Consider the following 108-residue polypeptide: Protein phosphatase 1 regulatory subunit 1C (108 aa).

The disordered stretch occupies residues 25 to 108 (AEQIRKRRPT…ASEREEKWNH (84 aa)). Positions 45 to 54 (NSPEIDEKRV) are enriched in basic and acidic residues. Polar residues predominate over residues 55-73 (TNTQESQNASPKQRKQSVY). Residues 99–108 (ASEREEKWNH) are compositionally biased toward basic and acidic residues.

It belongs to the protein phosphatase inhibitor 1 family.

It is found in the cytoplasm. Its function is as follows. May increase cell susceptibility to TNF-induced apoptosis. The protein is Protein phosphatase 1 regulatory subunit 1C (Ppp1r1c) of Mus musculus (Mouse).